The primary structure comprises 500 residues: Glycerol kinase (500 aa).

T12 is an ADP binding site. Residues T12, T13, and S14 each contribute to the ATP site. T12 contributes to the sn-glycerol 3-phosphate binding site. Residue R16 participates in ADP binding. R82, E83, Y135, and D245 together coordinate sn-glycerol 3-phosphate. Positions 82, 83, 135, 245, and 246 each coordinate glycerol. ADP-binding residues include T267 and G310. 4 residues coordinate ATP: T267, G310, Q314, and G411. Residues G411 and N415 each coordinate ADP.

Belongs to the FGGY kinase family. In terms of assembly, homotetramer and homodimer (in equilibrium).

It carries out the reaction glycerol + ATP = sn-glycerol 3-phosphate + ADP + H(+). It participates in polyol metabolism; glycerol degradation via glycerol kinase pathway; sn-glycerol 3-phosphate from glycerol: step 1/1. With respect to regulation, activated by phosphorylation and inhibited by fructose 1,6-bisphosphate (FBP). In terms of biological role, key enzyme in the regulation of glycerol uptake and metabolism. Catalyzes the phosphorylation of glycerol to yield sn-glycerol 3-phosphate. The polypeptide is Glycerol kinase (Clostridium perfringens (strain ATCC 13124 / DSM 756 / JCM 1290 / NCIMB 6125 / NCTC 8237 / Type A)).